Here is a 164-residue protein sequence, read N- to C-terminus: Probable metalloprotease y4qB (164 aa).

One can recognise an MPN domain in the interval 5–142; it reads IWIPESVVEA…WLPHAWIGQL (138 aa). 3 residues coordinate Zn(2+): His89, His91, and Asp103.

This sequence belongs to the peptidase M67B family.

The polypeptide is Probable metalloprotease y4qB (Sinorhizobium fredii (strain NBRC 101917 / NGR234)).